The primary structure comprises 173 residues: Ribosome maturation factor RimM (173 aa).

In terms of domain architecture, PRC barrel spans 98 to 171 (DDQYYYDEII…LITIDALEGL (74 aa)).

Belongs to the RimM family. As to quaternary structure, binds ribosomal protein uS19.

The protein localises to the cytoplasm. An accessory protein needed during the final step in the assembly of 30S ribosomal subunit, possibly for assembly of the head region. Essential for efficient processing of 16S rRNA. May be needed both before and after RbfA during the maturation of 16S rRNA. It has affinity for free ribosomal 30S subunits but not for 70S ribosomes. The chain is Ribosome maturation factor RimM from Leuconostoc mesenteroides subsp. mesenteroides (strain ATCC 8293 / DSM 20343 / BCRC 11652 / CCM 1803 / JCM 6124 / NCDO 523 / NBRC 100496 / NCIMB 8023 / NCTC 12954 / NRRL B-1118 / 37Y).